The chain runs to 358 residues: MLQLLVEFFSLTENQAYNNMSSKYTVTVLGGGSFGTAVANIIATNGHVSRLWMRDAARAERCQASRENTEYLPGYPLHDNLVATTDLIGSVSTSDIVVISVPSQSFREVAKLAAPHLRKDTIVISTTKGIDADGFFLMSQILEQELTDVRIGVLSGPNFAKEIVQNQYTGSVVASEHDEVLKCVQQVFSSNTFRIYSNPDRYGVELGGALKNIYAMVTGMAAALGCGHNTMAMLLTRSLAEMGRFARELGADSMTFLGLAGMGDLVLTCTSDLSRNYRVGFAVGRGKSLEQAVQEIGQVAEGVNTLRIVKKKAEELNVYMPLVDGLHAVLFDKQDLQQVIQGLMTGEMSSDVDLQGGL.

NADPH contacts are provided by serine 33, phenylalanine 34, arginine 54, and lysine 128. Residues lysine 128 and glycine 156 each contribute to the sn-glycerol 3-phosphate site. Alanine 160 is a binding site for NADPH. Sn-glycerol 3-phosphate contacts are provided by lysine 211, aspartate 264, serine 274, arginine 275, and asparagine 276. Lysine 211 (proton acceptor) is an active-site residue. Arginine 275 contacts NADPH. Residues valine 299 and glutamate 301 each coordinate NADPH.

It belongs to the NAD-dependent glycerol-3-phosphate dehydrogenase family.

The protein resides in the cytoplasm. It catalyses the reaction sn-glycerol 3-phosphate + NAD(+) = dihydroxyacetone phosphate + NADH + H(+). The enzyme catalyses sn-glycerol 3-phosphate + NADP(+) = dihydroxyacetone phosphate + NADPH + H(+). It participates in membrane lipid metabolism; glycerophospholipid metabolism. Functionally, catalyzes the reduction of the glycolytic intermediate dihydroxyacetone phosphate (DHAP) to sn-glycerol 3-phosphate (G3P), the key precursor for phospholipid synthesis. The sequence is that of Glycerol-3-phosphate dehydrogenase [NAD(P)+] from Saccharophagus degradans (strain 2-40 / ATCC 43961 / DSM 17024).